Consider the following 263-residue polypeptide: Pyrrolysine synthase (263 aa).

Residues Leu8, Val57, Ile64, and Ala107 each coordinate L-pyrrolysine. Positions 155, 156, 175, 210, 228, 230, and 249 each coordinate NAD(+).

Belongs to the PylD family.

It carries out the reaction (3R)-3-methyl-D-ornithyl-N(6)-L-lysine + NAD(+) = L-pyrrolysine + NH4(+) + NADH + 2 H(+). The protein operates within amino-acid biosynthesis; L-pyrrolysine biosynthesis. Functionally, catalyzes the ultimate step of the pyrrolysine biosynthesis pathway by converting the isopeptide (3R)-3-methyl-D-ornithyl-N(6)-L-lysine to the 22nd proteinogenic amino acid. Is able to use surrogate substrates such as (3R)-D-ornithyl-N(6)-L-lysine in vitro. This chain is Pyrrolysine synthase, found in Methanosarcina barkeri (strain Fusaro / DSM 804).